Reading from the N-terminus, the 151-residue chain is Large ribosomal subunit protein bL9 (151 aa).

The protein belongs to the bacterial ribosomal protein bL9 family.

Its function is as follows. Binds to the 23S rRNA. In Carboxydothermus hydrogenoformans (strain ATCC BAA-161 / DSM 6008 / Z-2901), this protein is Large ribosomal subunit protein bL9.